The following is a 146-amino-acid chain: Large ribosomal subunit protein uL11 (146 aa).

This sequence belongs to the universal ribosomal protein uL11 family. In terms of assembly, part of the ribosomal stalk of the 50S ribosomal subunit. Interacts with L10 and the large rRNA to form the base of the stalk. L10 forms an elongated spine to which L12 dimers bind in a sequential fashion forming a multimeric L10(L12)X complex. In terms of processing, one or more lysine residues are methylated.

In terms of biological role, forms part of the ribosomal stalk which helps the ribosome interact with GTP-bound translation factors. The polypeptide is Large ribosomal subunit protein uL11 (Buchnera aphidicola subsp. Baizongia pistaciae (strain Bp)).